The primary structure comprises 209 residues: Uracil phosphoribosyltransferase (209 aa).

Residues Arg-79, Arg-104, and 131 to 139 each bind 5-phospho-alpha-D-ribose 1-diphosphate; that span reads DPMLATGGS. Residues Ile-194 and 199–201 contribute to the uracil site; that span reads GDA. Asp-200 contributes to the 5-phospho-alpha-D-ribose 1-diphosphate binding site.

It belongs to the UPRTase family. It depends on Mg(2+) as a cofactor.

The enzyme catalyses UMP + diphosphate = 5-phospho-alpha-D-ribose 1-diphosphate + uracil. It participates in pyrimidine metabolism; UMP biosynthesis via salvage pathway; UMP from uracil: step 1/1. With respect to regulation, allosterically activated by GTP. Functionally, catalyzes the conversion of uracil and 5-phospho-alpha-D-ribose 1-diphosphate (PRPP) to UMP and diphosphate. The polypeptide is Uracil phosphoribosyltransferase (Ligilactobacillus salivarius (strain UCC118) (Lactobacillus salivarius)).